Consider the following 300-residue polypeptide: Protein SPEAR2 (300 aa).

A compositionally biased stretch (polar residues) spans 1 to 11; sequence MCSNNNTSSGS. Positions 1–64 are disordered; the sequence is MCSNNNTSSG…PPLSSSPSLP (64 aa). Positions 25–38 are enriched in basic residues; sequence CRKKQKKDKVRRRG. The SPL signature appears at 37–45; sequence RGPGVAELE. Residues 43 to 54 are compositionally biased toward basic and acidic residues; sequence ELEKIRLQEEYK. Residues 55–64 are compositionally biased toward low complexity; sequence PPLSSSPSLP. The EAR signature appears at 294–300; that stretch reads IDLNLKL.

In terms of assembly, homodimer and heterodimer with SPL and SPEARs. Interacts with SPL, SPEAR1, SPEAR3 and SPEAR4. Expressed in leaves.

In terms of biological role, adapter-like transcriptional repressor recruiting TPL/TPR corepressors to inhibit TCP transcription factors. May be involved in leaf development. This is Protein SPEAR2 from Arabidopsis thaliana (Mouse-ear cress).